A 225-amino-acid chain; its full sequence is Small ribosomal subunit protein L51-b (225 aa).

A mitochondrion-targeting transit peptide spans 1–84; sequence MKFPDLLRCS…QCAFISSDRF (84 aa).

This sequence belongs to the bacterial ribosomal protein bS1 family. As to quaternary structure, component of the mitochondrial small ribosomal subunit (mt-SSU). Mature yeast 74S mitochondrial ribosomes consist of a small (37S) and a large (54S) subunit. The 37S small subunit contains a 15S ribosomal RNA (15S mt-rRNA) and at least 32 different proteins. The 54S large subunit contains a 21S rRNA (21S mt-rRNA) and at least 45 different proteins. This subunit is mutually exclusive with mrp51/small ribosomal subunit protein bS1m.

The protein localises to the mitochondrion. Functionally, component of the mitochondrial ribosome (mitoribosome), a dedicated translation machinery responsible for the synthesis of mitochondrial genome-encoded proteins, including at least some of the essential transmembrane subunits of the mitochondrial respiratory chain. The mitoribosomes are attached to the mitochondrial inner membrane and translation products are cotranslationally integrated into the membrane. Functionally interacts with the 5'-UTR of mitochondrial mRNAs. Specifically plays a role in the translation of cob1/cytochrome b and cox3. Has a role in meiosis. This Schizosaccharomyces pombe (strain 972 / ATCC 24843) (Fission yeast) protein is Small ribosomal subunit protein L51-b.